We begin with the raw amino-acid sequence, 916 residues long: Protein translocase subunit SecA (916 aa).

ATP-binding positions include Gln-87, 105-109 (GEGKT), and Asp-512. The segment at 857-916 (QHAEAPSMEQAVAGEEEELPEGPAPVVPLEPVRNEQKIGRNEPCPCGSGKKYKHCHGQLD) is disordered. The Zn(2+) site is built by Cys-900, Cys-902, Cys-911, and His-912. Basic residues predominate over residues 906–916 (KKYKHCHGQLD).

Belongs to the SecA family. Monomer and homodimer. Part of the essential Sec protein translocation apparatus which comprises SecA, SecYEG and auxiliary proteins SecDF-YajC and YidC. Zn(2+) serves as cofactor.

The protein localises to the cell inner membrane. It localises to the cytoplasm. It catalyses the reaction ATP + H2O + cellular proteinSide 1 = ADP + phosphate + cellular proteinSide 2.. Part of the Sec protein translocase complex. Interacts with the SecYEG preprotein conducting channel. Has a central role in coupling the hydrolysis of ATP to the transfer of proteins into and across the cell membrane, serving both as a receptor for the preprotein-SecB complex and as an ATP-driven molecular motor driving the stepwise translocation of polypeptide chains across the membrane. The sequence is that of Protein translocase subunit SecA from Pseudomonas aeruginosa (strain UCBPP-PA14).